The primary structure comprises 385 residues: ATP synthase subunit a-1 (385 aa).

Residues 1-133 (MRRIFLFDEN…ALNIVGQAAA (133 aa)) constitute a propeptide that is removed on maturation. 7 helical membrane-spanning segments follow: residues 154 to 174 (FSFT…LLLI), 220 to 240 (FFPC…QGMI), 249 to 269 (HFLI…IVGF), 276 to 296 (FFSF…LVLL), 316 to 336 (MMAG…MLCM), 339 to 359 (IFYF…TGLE), and 362 to 382 (VAIL…NDAI).

The protein belongs to the ATPase A chain family. F-type ATPases have 2 components, CF(1) - the catalytic core - and CF(0) - the membrane proton channel. CF(1) has five subunits: alpha(3), beta(3), gamma(1), delta(1), epsilon(1). CF(0) has three main subunits: a, b and c.

Its subcellular location is the mitochondrion inner membrane. In terms of biological role, mitochondrial membrane ATP synthase (F(1)F(0) ATP synthase or Complex V) produces ATP from ADP in the presence of a proton gradient across the membrane which is generated by electron transport complexes of the respiratory chain. F-type ATPases consist of two structural domains, F(1) - containing the extramembraneous catalytic core and F(0) - containing the membrane proton channel, linked together by a central stalk and a peripheral stalk. During catalysis, ATP synthesis in the catalytic domain of F(1) is coupled via a rotary mechanism of the central stalk subunits to proton translocation. Key component of the proton channel; it may play a direct role in the translocation of protons across the membrane. The polypeptide is ATP synthase subunit a-1 (ATP6-1) (Arabidopsis thaliana (Mouse-ear cress)).